Reading from the N-terminus, the 520-residue chain is U3 small nucleolar RNA-associated protein 15 homolog (520 aa).

WD repeat units follow at residues K36–T75, R78–Q117, G120–S159, E162–T202, E204–V242, N246–S285, and N287–K326.

As to quaternary structure, part of the small subunit (SSU) processome, composed of more than 70 proteins and the RNA chaperone small nucleolar RNA (snoRNA) U3. May be a component of the proposed t-UTP subcomplex of the ribosomal small subunit (SSU) processome.

Its subcellular location is the nucleus. It is found in the nucleolus. Its function is as follows. Ribosome biogenesis factor. Involved in nucleolar processing of pre-18S ribosomal RNA. Required for optimal pre-ribosomal RNA transcription by RNA polymerase I. Part of the small subunit (SSU) processome, first precursor of the small eukaryotic ribosomal subunit. During the assembly of the SSU processome in the nucleolus, many ribosome biogenesis factors, an RNA chaperone and ribosomal proteins associate with the nascent pre-rRNA and work in concert to generate RNA folding, modifications, rearrangements and cleavage as well as targeted degradation of pre-ribosomal RNA by the RNA exosome. This chain is U3 small nucleolar RNA-associated protein 15 homolog (UTP15), found in Gallus gallus (Chicken).